The primary structure comprises 108 residues: Small ribosomal subunit protein bS18 (108 aa).

Polar residues predominate over residues Met-1–Ile-12. Residues Met-1–Lys-33 are disordered.

It belongs to the bacterial ribosomal protein bS18 family. In terms of assembly, part of the 30S ribosomal subunit. Forms a tight heterodimer with protein bS6.

Its function is as follows. Binds as a heterodimer with protein bS6 to the central domain of the 16S rRNA, where it helps stabilize the platform of the 30S subunit. The sequence is that of Small ribosomal subunit protein bS18 from Mycoplasmoides gallisepticum (strain R(low / passage 15 / clone 2)) (Mycoplasma gallisepticum).